Reading from the N-terminus, the 301-residue chain is uncharacterized protein (301 aa).

The signal sequence occupies residues 1-26 (MKGFSCSRPGYLTGLLLLAVAPILTA). Residue Cys-27 is the site of N-palmitoyl cysteine attachment. Residue Cys-27 is the site of S-diacylglycerol cysteine attachment. The 198-residue stretch at 46-243 (KLKPATIEYW…YNAKINIWSH (198 aa)) folds into the TNase-like domain. Residues 64–136 (NYASEERRKE…SKGDSTGDEK (73 aa)) are disordered. 2 stretches are compositionally biased toward basic and acidic residues: residues 67-95 (SEER…KTED) and 120-136 (TPEK…GDEK).

The protein resides in the cell membrane. This is an uncharacterized protein from Mycoplasma pneumoniae (strain ATCC 29342 / M129 / Subtype 1) (Mycoplasmoides pneumoniae).